The primary structure comprises 145 residues: Aspartate 1-decarboxylase (145 aa).

Catalysis depends on S26, which acts as the Schiff-base intermediate with substrate; via pyruvic acid. S26 carries the pyruvic acid (Ser) modification. T58 serves as a coordination point for substrate. Y59 functions as the Proton donor in the catalytic mechanism. 74 to 76 (GGA) contributes to the substrate binding site.

This sequence belongs to the PanD family. Heterooctamer of four alpha and four beta subunits. Pyruvate is required as a cofactor. Is synthesized initially as an inactive proenzyme, which is activated by self-cleavage at a specific serine bond to produce a beta-subunit with a hydroxyl group at its C-terminus and an alpha-subunit with a pyruvoyl group at its N-terminus.

It is found in the cytoplasm. It carries out the reaction L-aspartate + H(+) = beta-alanine + CO2. Its pathway is cofactor biosynthesis; (R)-pantothenate biosynthesis; beta-alanine from L-aspartate: step 1/1. Its function is as follows. Catalyzes the pyruvoyl-dependent decarboxylation of aspartate to produce beta-alanine. In Synechocystis sp. (strain ATCC 27184 / PCC 6803 / Kazusa), this protein is Aspartate 1-decarboxylase.